Reading from the N-terminus, the 148-residue chain is MKLDLKILDARMRDYLPKYATTGSAGLDLRACLDAPVTLKPGDTALVPTGLAIHLADPGYAALILPRSGLGHKHGIVLGNLVGLIDSDYQGELMISTWNRGQTEFALNPFERLAQLVIVPVVQARFNLVDDFAQSERGAGGFGSTGRG.

Substrate contacts are provided by residues 67 to 69 (RSG), Asn-80, 84 to 86 (LID), and Met-94.

The protein belongs to the dUTPase family. Mg(2+) is required as a cofactor.

The enzyme catalyses dUTP + H2O = dUMP + diphosphate + H(+). It participates in pyrimidine metabolism; dUMP biosynthesis; dUMP from dCTP (dUTP route): step 2/2. Functionally, this enzyme is involved in nucleotide metabolism: it produces dUMP, the immediate precursor of thymidine nucleotides and it decreases the intracellular concentration of dUTP so that uracil cannot be incorporated into DNA. This is Deoxyuridine 5'-triphosphate nucleotidohydrolase from Burkholderia mallei (strain NCTC 10247).